The sequence spans 347 residues: Phosphate acyltransferase (347 aa).

It belongs to the PlsX family. Homodimer. Probably interacts with PlsY.

The protein localises to the cytoplasm. The catalysed reaction is a fatty acyl-[ACP] + phosphate = an acyl phosphate + holo-[ACP]. It participates in lipid metabolism; phospholipid metabolism. In terms of biological role, catalyzes the reversible formation of acyl-phosphate (acyl-PO(4)) from acyl-[acyl-carrier-protein] (acyl-ACP). This enzyme utilizes acyl-ACP as fatty acyl donor, but not acyl-CoA. In Pediococcus pentosaceus (strain ATCC 25745 / CCUG 21536 / LMG 10740 / 183-1w), this protein is Phosphate acyltransferase.